The sequence spans 344 residues: MKALSKQESRAGIWMVDTEVPRPGPNDLLIRVKKGSICGTDVHIYKWDEWAQKTIPVPMVVGHEYVGVVAAMGSEVRGFNVGDRVSGEGHVTCGHCRNCRAGRRHLCRNTLGVGVNRPGSFAEYLVLPAFNAFKLPDDIPDDVAAIFDPFGNAVHTALSFDLVGEDVLVTGAGPIGVMAAAVARHVGARNVVITDINDYRLDLARKMGVTRAVNVTKEDLWSVARNELGMTEGFDVGLEMSGSGPAFAQMVDVMNNGGKIALLGIPSGDVRIDWNAVIFKMLTIKGIYGREMFETWYKMAALIQSGLDLRPIITHHFGIDDFQQGFDAMLSGQSGKVILDWEKR.

A Zn(2+)-binding site is contributed by C38. Catalysis depends on charge relay system residues T40 and H43. 6 residues coordinate Zn(2+): H63, E64, C93, C96, C99, and C107. NAD(+) contacts are provided by residues I175, D195, R200, 263-265 (LGI), and 287-288 (IY).

Belongs to the zinc-containing alcohol dehydrogenase family. Homotetramer. Zn(2+) serves as cofactor.

Its subcellular location is the cytoplasm. The enzyme catalyses L-threonine + NAD(+) = (2S)-2-amino-3-oxobutanoate + NADH + H(+). Its pathway is amino-acid degradation; L-threonine degradation via oxydo-reductase pathway; glycine from L-threonine: step 1/2. Its function is as follows. Catalyzes the NAD(+)-dependent oxidation of L-threonine to 2-amino-3-ketobutyrate. This is L-threonine 3-dehydrogenase from Deinococcus deserti (strain DSM 17065 / CIP 109153 / LMG 22923 / VCD115).